We begin with the raw amino-acid sequence, 381 residues long: cAMP-dependent protein kinase type I-alpha regulatory subunit (381 aa).

Met1 carries the N-acetylmethionine modification. The interval 1 to 135 (MESGSTAASE…AALAKAIEKN (135 aa)) is dimerization and phosphorylation. Ser3 bears the Phosphoserine mark. The disordered stretch occupies residues 64–96 (QIQNLQKAGTRTDSREDEISPPPPNPVVKGRRR). Residue Thr75 is modified to Phosphothreonine. 2 positions are modified to phosphoserine: Ser77 and Ser83. The Pseudophosphorylation motif signature appears at 96-100 (RRGAI). Ser101 carries the post-translational modification Phosphoserine. Residues 137–254 (LFSH…SKVS), Glu202, Arg211, 255–381 (ILES…SLSV), Glu326, and Arg335 contribute to the 3',5'-cyclic AMP site. Position 258 is a phosphoserine (Ser258).

Belongs to the cAMP-dependent kinase regulatory chain family. The inactive holoenzyme is composed of two regulatory chains and two catalytic chains. Activation by cAMP releases the two active catalytic monomers and the regulatory dimer. Interacts with PRKACA and PRKACB. PRKAR1A also interacts with RFC2; the complex may be involved in cell survival. Interacts with AKAP4. Interacts with RARA; the interaction occurs in the presence of cAMP or FSH and regulates RARA transcriptional activity. Interacts with the phosphorylated form of PJA2. Interacts with CBFA2T3. Interacts with PRKX; regulates this cAMP-dependent protein kinase. Interacts with smAKAP; this interaction may target PRKAR1A to the plasma membrane. Interacts with AICDA. In terms of processing, the pseudophosphorylation site binds to the substrate-binding region of the catalytic chain, resulting in the inhibition of its activity.

Its subcellular location is the cell membrane. Its function is as follows. Regulatory subunit of the cAMP-dependent protein kinases involved in cAMP signaling in cells. This Pongo abelii (Sumatran orangutan) protein is cAMP-dependent protein kinase type I-alpha regulatory subunit (PRKAR1A).